A 440-amino-acid chain; its full sequence is Transposon Ty1-OL Gag polyprotein (440 aa).

3 stretches are compositionally biased toward polar residues: residues 1 to 23 (MESQ…SVTS), 48 to 60 (TKAN…TPAS), and 127 to 152 (QSQF…GNTF). Disordered stretches follow at residues 1 to 93 (MESQ…MMTQ), 126 to 173 (PQSQ…RPPP), and 352 to 440 (GSRN…PGTY). The segment covering 153 to 165 (TDSSSADSDMTST) has biased composition (low complexity). Positions 299–401 (NNGIHINNKV…NSKSKTARAH (103 aa)) are RNA-binding. Low complexity predominate over residues 402 to 418 (NVSTSNNSPSTDNDSIS). Position 416 is a phosphoserine (S416). Positions 419–428 (KSTTEPIQLN) are enriched in polar residues. The span at 429 to 440 (NKHDLHLRPGTY) shows a compositional bias: basic and acidic residues.

Homotrimer.

It localises to the cytoplasm. Functionally, capsid protein (CA) is the structural component of the virus-like particle (VLP), forming the shell that encapsulates the retrotransposons dimeric RNA genome. The particles are assembled from trimer-clustered units and there are holes in the capsid shells that allow for the diffusion of macromolecules. CA also has nucleocapsid-like chaperone activity, promoting primer tRNA(i)-Met annealing to the multipartite primer-binding site (PBS), dimerization of Ty1 RNA and initiation of reverse transcription. This is Transposon Ty1-OL Gag polyprotein (TY1A-OL) from Saccharomyces cerevisiae (strain ATCC 204508 / S288c) (Baker's yeast).